The following is a 249-amino-acid chain: 3-deoxy-manno-octulosonate cytidylyltransferase (249 aa).

It belongs to the KdsB family.

Its subcellular location is the cytoplasm. The catalysed reaction is 3-deoxy-alpha-D-manno-oct-2-ulosonate + CTP = CMP-3-deoxy-beta-D-manno-octulosonate + diphosphate. The protein operates within nucleotide-sugar biosynthesis; CMP-3-deoxy-D-manno-octulosonate biosynthesis; CMP-3-deoxy-D-manno-octulosonate from 3-deoxy-D-manno-octulosonate and CTP: step 1/1. It functions in the pathway bacterial outer membrane biogenesis; lipopolysaccharide biosynthesis. Its function is as follows. Activates KDO (a required 8-carbon sugar) for incorporation into bacterial lipopolysaccharide in Gram-negative bacteria. The chain is 3-deoxy-manno-octulosonate cytidylyltransferase from Coxiella burnetii (strain CbuG_Q212) (Coxiella burnetii (strain Q212)).